Reading from the N-terminus, the 98-residue chain is Class II hydrophobin 2 (98 aa).

Residues 1–21 form the signal peptide; the sequence is MFFSRISTIVSMTALFASALA. 4 cysteine pairs are disulfide-bonded: Cys34/Cys80, Cys41/Cys71, Cys42/Cys54, and Cys81/Cys92.

It belongs to the cerato-ulmin hydrophobin family.

It is found in the secreted. Its subcellular location is the cell wall. Its function is as follows. Aerial growth, conidiation, and dispersal of filamentous fungi in the environment rely upon a capability of their secreting small amphipathic proteins called hydrophobins (HPBs) with low sequence identity. Class I can self-assemble into an outermost layer of rodlet bundles on aerial cell surfaces, conferring cellular hydrophobicity that supports fungal growth, development and dispersal; whereas Class II form highly ordered films at water-air interfaces through intermolecular interactions but contribute nothing to the rodlet structure. In Botryotinia fuckeliana, hydrophobins are not involved in conferring surface hydrophobicity to conidia and aerial hyphae and their function in sclerotia and fruiting bodies remains to be investigated. In Botryotinia fuckeliana (strain B05.10) (Noble rot fungus), this protein is Class II hydrophobin 2.